The following is an 876-amino-acid chain: Alanine--tRNA ligase (876 aa).

Residues 2–461 (SKSTAEIRQA…VDSASEFKGY (460 aa)) form a catalytic region. Lys74 bears the N6-acetyllysine mark. An editing region spans residues 553–705 (DEARRARIRL…EAVTGEGAIA (153 aa)). His564, His568, Cys666, and His670 together coordinate Zn(2+). An important for oligomerization region spans residues 699–808 (TGEGAIATVH…STIIVLATVV (110 aa)). The C-Ala domain stretch occupies residues 766-875 (IDVNGVKLLV…SVKGWVSAKL (110 aa)).

This sequence belongs to the class-II aminoacyl-tRNA synthetase family. In terms of assembly, homotetramer. It depends on Zn(2+) as a cofactor.

It localises to the cytoplasm. It carries out the reaction tRNA(Ala) + L-alanine + ATP = L-alanyl-tRNA(Ala) + AMP + diphosphate. The enzyme catalyses (S)-lactate + ATP + H(+) = (S)-lactoyl-AMP + diphosphate. It catalyses the reaction (S)-lactoyl-AMP + L-lysyl-[protein] = N(6)-[(S)-lactoyl]-L-lysyl-[protein] + AMP + 2 H(+). Acetylation at Lys-74 decreases the alanylation activity for tRNA(Ala); a protein that is fully acetylated is inactive in vitro. In terms of biological role, catalyzes the attachment of L-alanine to tRNA(Ala) in a two-step reaction: L-alanine is first activated by ATP to form Ala-AMP and then transferred to the acceptor end of tRNA(Ala). AlaRS also incorrectly activates the sterically smaller amino acid glycine as well as the sterically larger amino acid L-serine; generates 2-fold more mischarged Gly than Ser. These mischarged amino acids occur because the of inherent physicochemical limitations on discrimination between closely related amino acids (Ala, Gly and Ser) in the charging step. In presence of high levels of lactate, also acts as a protein lactyltransferase that mediates lactylation of lysine residues in target proteins. Edits mischarged Ser-tRNA(Ala) and Gly-tRNA(Ala) but not incorrectly charged Ser-tRNA(Thr). Dtd edits Gly-tRNA(Ala) 4-fold better than does AlaRS. Its function is as follows. Attaches Ala to transfer-messenger RNA (tmRNA, also known as 10Sa RNA, the product of the ssrA gene). tmRNA plays a major role in rescue of stalled ribosomes via trans-translation. This Escherichia coli (strain K12) protein is Alanine--tRNA ligase (alaS).